A 379-amino-acid polypeptide reads, in one-letter code: MEQRDYYELLEVSRNASDAEIKKAYRRLAMKYHPDRNPGDTSAEEKFKEIQKAYNILSDKQKRAAYDQFGHAGVDPSMGGGPGGFGGFGGFGDVFEDIFENIFSGGRGHGRQSRGQRGADLQFNVQLTLEEAAIGKEVEITVPRHGTCTVCEGSGAKKGTSPKTCETCQGMGQVRIQQGFFSIQQTCPTCHGEGKIISDPCASCHGQGRVRESKKINVKIPAGVDNGDRVRLSGEGEAGVHGGGSGDLYVQISLKKHAIFERHENDLHCEVPISFATAALGGSIEVPTLEGRVTLKIPAETQTGKVFRLRSKGMKSVRGYGQGDLLCKVVVETPVNLSREQKELLNKLQDSLENAKGTHSPKTSSWFAGVKKFFEDMKF.

The J domain occupies 5 to 70; sequence DYYELLEVSR…QKRAAYDQFG (66 aa). The CR-type zinc-finger motif lies at 135–213; sequence GKEVEITVPR…CHGQGRVRES (79 aa). Residues Cys148, Cys151, Cys165, Cys168, Cys187, Cys190, Cys201, and Cys204 each coordinate Zn(2+). CXXCXGXG motif repeat units follow at residues 148-155, 165-172, 187-194, and 201-208; these read CTVCEGSG, CETCQGMG, CPTCHGEG, and CASCHGQG.

It belongs to the DnaJ family. As to quaternary structure, homodimer. It depends on Zn(2+) as a cofactor.

It is found in the cytoplasm. Its function is as follows. Participates actively in the response to hyperosmotic and heat shock by preventing the aggregation of stress-denatured proteins and by disaggregating proteins, also in an autonomous, DnaK-independent fashion. Unfolded proteins bind initially to DnaJ; upon interaction with the DnaJ-bound protein, DnaK hydrolyzes its bound ATP, resulting in the formation of a stable complex. GrpE releases ADP from DnaK; ATP binding to DnaK triggers the release of the substrate protein, thus completing the reaction cycle. Several rounds of ATP-dependent interactions between DnaJ, DnaK and GrpE are required for fully efficient folding. Also involved, together with DnaK and GrpE, in the DNA replication of plasmids through activation of initiation proteins. The chain is Chaperone protein DnaJ from Legionella pneumophila (strain Corby).